We begin with the raw amino-acid sequence, 205 residues long: Cytochrome c biogenesis ATP-binding export protein CcmA 2 (205 aa).

Residues 2–205 (LEARDLHCER…LALTGGEAGL (204 aa)) enclose the ABC transporter domain. 34–41 (GGNGAGKT) contributes to the ATP binding site.

Belongs to the ABC transporter superfamily. CcmA exporter (TC 3.A.1.107) family. As to quaternary structure, the complex is composed of two ATP-binding proteins (CcmA) and two transmembrane proteins (CcmB).

The protein localises to the cell inner membrane. It carries out the reaction heme b(in) + ATP + H2O = heme b(out) + ADP + phosphate + H(+). Functionally, part of the ABC transporter complex CcmAB involved in the biogenesis of c-type cytochromes; once thought to export heme, this seems not to be the case, but its exact role is uncertain. Responsible for energy coupling to the transport system. This Salmonella paratyphi A (strain ATCC 9150 / SARB42) protein is Cytochrome c biogenesis ATP-binding export protein CcmA 2.